The following is a 193-amino-acid chain: Xanthine phosphoribosyltransferase (193 aa).

Xanthine contacts are provided by L20 and N27. Position 129-133 (129-133 (ANGKA)) interacts with 5-phospho-alpha-D-ribose 1-diphosphate. Xanthine is bound at residue K157.

This sequence belongs to the purine/pyrimidine phosphoribosyltransferase family. Xpt subfamily. Homodimer.

The protein localises to the cytoplasm. The catalysed reaction is XMP + diphosphate = xanthine + 5-phospho-alpha-D-ribose 1-diphosphate. The protein operates within purine metabolism; XMP biosynthesis via salvage pathway; XMP from xanthine: step 1/1. Its function is as follows. Converts the preformed base xanthine, a product of nucleic acid breakdown, to xanthosine 5'-monophosphate (XMP), so it can be reused for RNA or DNA synthesis. The polypeptide is Xanthine phosphoribosyltransferase (Bifidobacterium longum subsp. infantis (strain ATCC 15697 / DSM 20088 / JCM 1222 / NCTC 11817 / S12)).